A 527-amino-acid chain; its full sequence is Coiled-coil domain-containing protein 148 (527 aa).

Coiled coils occupy residues 289-353 (LAKD…TEIK) and 401-438 (LEKR…VAVQ).

This chain is Coiled-coil domain-containing protein 148 (Ccdc148), found in Mus musculus (Mouse).